The following is an 880-amino-acid chain: Translation initiation factor IF-2 (880 aa).

3 disordered regions span residues 51 to 78 (KQHGGESKTKMTLQRKTKSTLNVKGSTG), 93 to 116 (YVKRSDSETQETQAAELADQQAAN), and 142 to 293 (KEAD…FEKP). The span at 69 to 78 (STLNVKGSTG) shows a compositional bias: polar residues. Basic and acidic residues predominate over residues 142–229 (KEADEKAKKA…ARKKAAEGGD (88 aa)). Over residues 269 to 279 (GRRTRRGKKQR) the composition is skewed to basic residues. Positions 380 to 549 (SRAPVVTIMG…LLQAEMLDLS (170 aa)) constitute a tr-type G domain. Residues 389-396 (GHVDHGKT) are G1. Residue 389-396 (GHVDHGKT) participates in GTP binding. The interval 414-418 (GITQH) is G2. Residues 435 to 438 (DTPG) form a G3 region. GTP is bound by residues 435–439 (DTPGH) and 489–492 (NKID). The segment at 489–492 (NKID) is G4. The segment at 525–527 (SAK) is G5.

The protein belongs to the TRAFAC class translation factor GTPase superfamily. Classic translation factor GTPase family. IF-2 subfamily.

It localises to the cytoplasm. Its function is as follows. One of the essential components for the initiation of protein synthesis. Protects formylmethionyl-tRNA from spontaneous hydrolysis and promotes its binding to the 30S ribosomal subunits. Also involved in the hydrolysis of GTP during the formation of the 70S ribosomal complex. The chain is Translation initiation factor IF-2 from Psychromonas ingrahamii (strain DSM 17664 / CCUG 51855 / 37).